A 338-amino-acid chain; its full sequence is Holliday junction branch migration complex subunit RuvB (338 aa).

Residues 1–180 (MTRLVTPDIT…FGVISRLEFY (180 aa)) are large ATPase domain (RuvB-L). Residues Leu-19, Arg-20, Gly-61, Lys-64, Thr-65, Thr-66, 127-129 (EDY), Arg-170, Tyr-180, and Arg-217 each bind ATP. Thr-65 contributes to the Mg(2+) binding site. The small ATPAse domain (RuvB-S) stretch occupies residues 181-251 (TDDELTTIVT…VVDESLKLLE (71 aa)). Residues 254 to 338 (EKGFDHMDRT…PPSSSQGNLF (85 aa)) are head domain (RuvB-H). 3 residues coordinate DNA: Arg-290, Arg-309, and Arg-314.

It belongs to the RuvB family. In terms of assembly, homohexamer. Forms an RuvA(8)-RuvB(12)-Holliday junction (HJ) complex. HJ DNA is sandwiched between 2 RuvA tetramers; dsDNA enters through RuvA and exits via RuvB. An RuvB hexamer assembles on each DNA strand where it exits the tetramer. Each RuvB hexamer is contacted by two RuvA subunits (via domain III) on 2 adjacent RuvB subunits; this complex drives branch migration. In the full resolvosome a probable DNA-RuvA(4)-RuvB(12)-RuvC(2) complex forms which resolves the HJ.

The protein resides in the cytoplasm. The catalysed reaction is ATP + H2O = ADP + phosphate + H(+). Functionally, the RuvA-RuvB-RuvC complex processes Holliday junction (HJ) DNA during genetic recombination and DNA repair, while the RuvA-RuvB complex plays an important role in the rescue of blocked DNA replication forks via replication fork reversal (RFR). RuvA specifically binds to HJ cruciform DNA, conferring on it an open structure. The RuvB hexamer acts as an ATP-dependent pump, pulling dsDNA into and through the RuvAB complex. RuvB forms 2 homohexamers on either side of HJ DNA bound by 1 or 2 RuvA tetramers; 4 subunits per hexamer contact DNA at a time. Coordinated motions by a converter formed by DNA-disengaged RuvB subunits stimulates ATP hydrolysis and nucleotide exchange. Immobilization of the converter enables RuvB to convert the ATP-contained energy into a lever motion, pulling 2 nucleotides of DNA out of the RuvA tetramer per ATP hydrolyzed, thus driving DNA branch migration. The RuvB motors rotate together with the DNA substrate, which together with the progressing nucleotide cycle form the mechanistic basis for DNA recombination by continuous HJ branch migration. Branch migration allows RuvC to scan DNA until it finds its consensus sequence, where it cleaves and resolves cruciform DNA. This is Holliday junction branch migration complex subunit RuvB from Geobacter metallireducens (strain ATCC 53774 / DSM 7210 / GS-15).